Here is a 310-residue protein sequence, read N- to C-terminus: U-megalopygitoxin(8)-Mo15 (310 aa).

An N-terminal signal peptide occupies residues 1–27 (MARFSSKNLTKLFQYLVLSLLSPVAFG).

The protein belongs to the megalysin family. Post-translationally, contains 3 disulfide bonds. In terms of tissue distribution, expressed by the venom apparatus.

It is found in the secreted. Its subcellular location is the target cell membrane. May function as a large pore-forming protein. The chain is U-megalopygitoxin(8)-Mo15 from Megalopyge opercularis (Southern flannel moth).